The chain runs to 529 residues: Tyrosinase (529 aa).

Positions 1 to 18 (MLLAVLYCLLWSFQTSAG) are cleaved as a signal peptide. At 19 to 476 (HFPRACVSSK…YLEQASRIWS (458 aa)) the chain is on the lumenal, melanosome side. N-linked (GlcNAc...) asparagine glycosylation is found at Asn-86, Asn-111, and Asn-161. 3 residues coordinate Cu cation: His-180, His-202, and His-211. Asn-230 is a glycosylation site (N-linked (GlcNAc...) asparagine). The tract at residues 287–313 (SLCNGTPEGPLQRNPGNHDKSRTPRLP) is disordered. An N-linked (GlcNAc...) asparagine glycan is attached at Asn-337. His-363 and His-367 together coordinate Cu cation. N-linked (GlcNAc...) asparagine glycosylation occurs at Asn-371. His-390 contributes to the Cu cation binding site. A helical transmembrane segment spans residues 477-497 (WLLGAAMVGAVLTALLAGLVS). Over 498-529 (LLCRHKRKQLPEEKQPLLMEKEDYHSLYQSHL) the chain is Cytoplasmic.

The protein belongs to the tyrosinase family. As to quaternary structure, forms an OPN3-dependent complex with DCT in response to blue light in melanocytes. The cofactor is Cu(2+). Glycosylated.

The protein localises to the melanosome membrane. Its subcellular location is the melanosome. The catalysed reaction is 2 L-dopa + O2 = 2 L-dopaquinone + 2 H2O. It catalyses the reaction L-tyrosine + O2 = L-dopaquinone + H2O. The enzyme catalyses 2 5,6-dihydroxyindole-2-carboxylate + O2 = 2 indole-5,6-quinone-2-carboxylate + 2 H2O. In terms of biological role, this is a copper-containing oxidase that functions in the formation of pigments such as melanins and other polyphenolic compounds. Catalyzes the initial and rate limiting step in the cascade of reactions leading to melanin production from tyrosine. In addition to hydroxylating tyrosine to DOPA (3,4-dihydroxyphenylalanine), also catalyzes the oxidation of DOPA to DOPA-quinone, and possibly the oxidation of DHI (5,6-dihydroxyindole) to indole-5,6 quinone. In Gorilla gorilla gorilla (Western lowland gorilla), this protein is Tyrosinase (TYR).